The following is a 27-amino-acid chain: Potassium channel toxin alpha-KTx 9.11 (27 aa).

Intrachain disulfides connect Cys3–Cys19, Cys6–Cys23, and Cys10–Cys25.

This sequence belongs to the short scorpion toxin superfamily. Potassium channel inhibitor family. Alpha-KTx 09 subfamily. As to expression, expressed by the venom gland.

It is found in the secreted. Functionally, may play a role in blocking voltage-gated potassium channels Kv1.2/KCNA2, Kv1.3/KCNA3 and Kv1.6/KCNA6 to a lesser extent. The sequence is that of Potassium channel toxin alpha-KTx 9.11 from Mesobuthus gibbosus (Mediterranean checkered scorpion).